Consider the following 256-residue polypeptide: Acetylglutamate kinase (256 aa).

Residues glycine 40–glycine 41, arginine 62, and asparagine 154 each bind substrate.

Belongs to the acetylglutamate kinase family. ArgB subfamily.

It is found in the cytoplasm. The enzyme catalyses N-acetyl-L-glutamate + ATP = N-acetyl-L-glutamyl 5-phosphate + ADP. Its pathway is amino-acid biosynthesis; L-arginine biosynthesis; N(2)-acetyl-L-ornithine from L-glutamate: step 2/4. In terms of biological role, catalyzes the ATP-dependent phosphorylation of N-acetyl-L-glutamate. In Staphylococcus aureus (strain MRSA252), this protein is Acetylglutamate kinase.